Here is a 330-residue protein sequence, read N- to C-terminus: Inactive hydroxysteroid dehydrogenase-like protein 1 (330 aa).

An N-acetylalanine modification is found at Ala-2. The tract at residues 2-82 (AAVDSFYLLY…SGATDGIGKA (81 aa)) is required for mitochondria translocation. NADP(+)-binding positions include 74 to 80 (GATDGIG), Asp-125, and Lys-222.

Belongs to the short-chain dehydrogenases/reductases (SDR) family. 17-beta-HSD 3 subfamily. In terms of assembly, interacts with STYXL1.

The protein localises to the mitochondrion. This Mus musculus (Mouse) protein is Inactive hydroxysteroid dehydrogenase-like protein 1 (Hsdl1).